We begin with the raw amino-acid sequence, 761 residues long: Xaa-Pro dipeptidyl-peptidase (761 aa).

Active-site charge relay system residues include Ser-349, Asp-469, and His-499.

The protein belongs to the peptidase S15 family. As to quaternary structure, homodimer.

It is found in the cytoplasm. The enzyme catalyses Hydrolyzes Xaa-Pro-|- bonds to release unblocked, N-terminal dipeptides from substrates including Ala-Pro-|-p-nitroanilide and (sequentially) Tyr-Pro-|-Phe-Pro-|-Gly-Pro-|-Ile.. Removes N-terminal dipeptides sequentially from polypeptides having unsubstituted N-termini provided that the penultimate residue is proline. This chain is Xaa-Pro dipeptidyl-peptidase, found in Streptococcus equi subsp. zooepidemicus (strain H70).